The following is a 276-amino-acid chain: Large ribosomal subunit protein uL2 (276 aa).

The interval 224-265 (VMNPVDHPHGGGEGRTASGRHPVSPWGLPTKGYKTRNNKRTD) is disordered.

It belongs to the universal ribosomal protein uL2 family. In terms of assembly, part of the 50S ribosomal subunit. Forms a bridge to the 30S subunit in the 70S ribosome.

One of the primary rRNA binding proteins. Required for association of the 30S and 50S subunits to form the 70S ribosome, for tRNA binding and peptide bond formation. It has been suggested to have peptidyltransferase activity; this is somewhat controversial. Makes several contacts with the 16S rRNA in the 70S ribosome. This is Large ribosomal subunit protein uL2 from Dichelobacter nodosus (strain VCS1703A).